A 122-amino-acid polypeptide reads, in one-letter code: Large ribosomal subunit protein uL14 (122 aa).

The protein belongs to the universal ribosomal protein uL14 family. As to quaternary structure, part of the 50S ribosomal subunit. Forms a cluster with proteins L3 and L19. In the 70S ribosome, L14 and L19 interact and together make contacts with the 16S rRNA in bridges B5 and B8.

Binds to 23S rRNA. Forms part of two intersubunit bridges in the 70S ribosome. The chain is Large ribosomal subunit protein uL14 from Hydrogenovibrio crunogenus (strain DSM 25203 / XCL-2) (Thiomicrospira crunogena).